A 150-amino-acid polypeptide reads, in one-letter code: MDINPLLYLQAFNNDATTFNTQGHLLEQQSDSPYFDTFANAMQAYLDTKRGGNDEEGTIIIMDDEDFNDSESLEDFLQMLNDEELNDEFSSDDEPEERVNFHEVNHHEVNHHKINHHEVNHHKINQHEPSENPQATFDITEFIKTEDEED.

5 repeat units span residues 101 to 105, 106 to 110, 111 to 115, 116 to 120, and 121 to 125. Residues 101–125 are 5 X 5 AA tandem repeats of [FH]-H-[EK]-[IV]-N; sequence FHEVNHHEVNHHKINHHEVNHHKIN.

This sequence belongs to the asfivirus D129L family.

This is an uncharacterized protein from African swine fever virus (isolate Tick/Malawi/Lil 20-1/1983) (ASFV).